A 144-amino-acid chain; its full sequence is Putative HTH-type transcriptional regulator aq_268 (144 aa).

Residues 2-133 (IFSDTVRYAL…KGTTIKDLIN (132 aa)) enclose the HTH rrf2-type domain.

The polypeptide is Putative HTH-type transcriptional regulator aq_268 (Aquifex aeolicus (strain VF5)).